The chain runs to 409 residues: Argininosuccinate synthase (409 aa).

Residues 12-20 (AYSGGLDTS) and Ala-39 each bind ATP. L-citrulline contacts are provided by Tyr-90 and Ser-95. Residue Gly-120 coordinates ATP. 3 residues coordinate L-aspartate: Thr-122, Asn-126, and Asp-127. Asn-126 provides a ligand contact to L-citrulline. Residues Arg-130, Ser-181, Ser-190, Glu-266, and Tyr-278 each coordinate L-citrulline.

This sequence belongs to the argininosuccinate synthase family. Type 1 subfamily. As to quaternary structure, homotetramer.

It is found in the cytoplasm. The catalysed reaction is L-citrulline + L-aspartate + ATP = 2-(N(omega)-L-arginino)succinate + AMP + diphosphate + H(+). It participates in amino-acid biosynthesis; L-arginine biosynthesis; L-arginine from L-ornithine and carbamoyl phosphate: step 2/3. The protein is Argininosuccinate synthase of Gluconacetobacter diazotrophicus (strain ATCC 49037 / DSM 5601 / CCUG 37298 / CIP 103539 / LMG 7603 / PAl5).